The chain runs to 276 residues: Elongation factor Ts (276 aa).

The segment at 76–79 (TDFV) is involved in Mg(2+) ion dislocation from EF-Tu.

This sequence belongs to the EF-Ts family.

Its subcellular location is the cytoplasm. In terms of biological role, associates with the EF-Tu.GDP complex and induces the exchange of GDP to GTP. It remains bound to the aminoacyl-tRNA.EF-Tu.GTP complex up to the GTP hydrolysis stage on the ribosome. The chain is Elongation factor Ts from Mycobacterium leprae (strain Br4923).